We begin with the raw amino-acid sequence, 532 residues long: CTP synthase (532 aa).

An amidoligase domain region spans residues 1-269; the sequence is MNQASTRFIF…DTQILNHFNI (269 aa). S17 is a binding site for CTP. S17 is a binding site for UTP. Residues 18–23 and D75 contribute to the ATP site; that span reads SLGKGL. The Mg(2+) site is built by D75 and E143. Residues 150–152, 190–195, and K226 each bind CTP; these read DIE and KTKPTQ. Residues 190–195 and K226 contribute to the UTP site; that span reads KTKPTQ. Residues 294-532 enclose the Glutamine amidotransferase type-1 domain; that stretch reads NVAIIGKYIK…FISFIKASLD (239 aa). G355 contacts L-glutamine. C382 (nucleophile; for glutamine hydrolysis) is an active-site residue. L-glutamine contacts are provided by residues 383-386, E406, and R462; that span reads MGMQ. Active-site residues include H509 and E511.

It belongs to the CTP synthase family. As to quaternary structure, homotetramer.

The enzyme catalyses UTP + L-glutamine + ATP + H2O = CTP + L-glutamate + ADP + phosphate + 2 H(+). It catalyses the reaction L-glutamine + H2O = L-glutamate + NH4(+). The catalysed reaction is UTP + NH4(+) + ATP = CTP + ADP + phosphate + 2 H(+). It functions in the pathway pyrimidine metabolism; CTP biosynthesis via de novo pathway; CTP from UDP: step 2/2. Allosterically activated by GTP, when glutamine is the substrate; GTP has no effect on the reaction when ammonia is the substrate. The allosteric effector GTP functions by stabilizing the protein conformation that binds the tetrahedral intermediate(s) formed during glutamine hydrolysis. Inhibited by the product CTP, via allosteric rather than competitive inhibition. Functionally, catalyzes the ATP-dependent amination of UTP to CTP with either L-glutamine or ammonia as the source of nitrogen. Regulates intracellular CTP levels through interactions with the four ribonucleotide triphosphates. This is CTP synthase from Ehrlichia chaffeensis (strain ATCC CRL-10679 / Arkansas).